Reading from the N-terminus, the 382-residue chain is Bifunctional enzyme IspD/IspF (382 aa).

The 2-C-methyl-D-erythritol 4-phosphate cytidylyltransferase stretch occupies residues 1 to 226; sequence MTLAVLIVAA…RSTMDNIPDI (226 aa). A 2-C-methyl-D-erythritol 2,4-cyclodiphosphate synthase region spans residues 227-382; it reads RLGNGYDVHR…ALATATLVRA (156 aa). Residues aspartate 233 and histidine 235 each contribute to the a divalent metal cation site. 4-CDP-2-C-methyl-D-erythritol 2-phosphate contacts are provided by residues 233 to 235 and 259 to 260; these read DVH and HS. Residue histidine 267 coordinates a divalent metal cation. 4-CDP-2-C-methyl-D-erythritol 2-phosphate is bound by residues 281–283, 357–360, phenylalanine 364, and arginine 367; these read DIG and TTSE.

It in the N-terminal section; belongs to the IspD/TarI cytidylyltransferase family. IspD subfamily. The protein in the C-terminal section; belongs to the IspF family. The cofactor is a divalent metal cation.

It carries out the reaction 2-C-methyl-D-erythritol 4-phosphate + CTP + H(+) = 4-CDP-2-C-methyl-D-erythritol + diphosphate. The catalysed reaction is 4-CDP-2-C-methyl-D-erythritol 2-phosphate = 2-C-methyl-D-erythritol 2,4-cyclic diphosphate + CMP. It functions in the pathway isoprenoid biosynthesis; isopentenyl diphosphate biosynthesis via DXP pathway; isopentenyl diphosphate from 1-deoxy-D-xylulose 5-phosphate: step 2/6. Its pathway is isoprenoid biosynthesis; isopentenyl diphosphate biosynthesis via DXP pathway; isopentenyl diphosphate from 1-deoxy-D-xylulose 5-phosphate: step 4/6. Its function is as follows. Bifunctional enzyme that catalyzes the formation of 4-diphosphocytidyl-2-C-methyl-D-erythritol from CTP and 2-C-methyl-D-erythritol 4-phosphate (MEP) (IspD), and catalyzes the conversion of 4-diphosphocytidyl-2-C-methyl-D-erythritol 2-phosphate (CDP-ME2P) to 2-C-methyl-D-erythritol 2,4-cyclodiphosphate (ME-CPP) with a corresponding release of cytidine 5-monophosphate (CMP) (IspF). The sequence is that of Bifunctional enzyme IspD/IspF from Ruegeria sp. (strain TM1040) (Silicibacter sp.).